We begin with the raw amino-acid sequence, 338 residues long: Protein SGT1 homolog (338 aa).

Position 2 is an N-acetylalanine (A2). TPR repeat units lie at residues A11–D45, A46–S79, and S80–D113. A CS domain is found at Q142–E231. Positions L249 to Y338 constitute an SGS domain. S254 is subject to Phosphoserine. At T257 the chain carries Phosphothreonine. K268 participates in a covalent cross-link: Glycyl lysine isopeptide (Lys-Gly) (interchain with G-Cter in SUMO1); alternate. K268 participates in a covalent cross-link: Glycyl lysine isopeptide (Lys-Gly) (interchain with G-Cter in SUMO2); alternate. The residue at position 304 (S304) is a Phosphoserine.

It belongs to the SGT1 family. Probably associates with SCF (SKP1-CUL1-F-box protein) complex through interaction with SKP1. Interacts with S100A6. Interacts with HSP90. In terms of processing, phosphorylated at Ser-254 and Ser-304, dephosphorylation promotes nuclear translocation, most likely due to disruption of the SUGT1-HSP90 complex.

It localises to the cytoplasm. The protein resides in the nucleus. Its function is as follows. May play a role in ubiquitination and subsequent proteasomal degradation of target proteins. This is Protein SGT1 homolog from Bos taurus (Bovine).